The sequence spans 1604 residues: Metabotropic glutamate receptor-like protein R (1604 aa).

The signal sequence occupies residues 1 to 27; the sequence is MVIKKPFIFIFICFLICLLICIDLTNC. Residues 28–1149 are Extracellular-facing; it reads NTINNNNNNN…TDVSKTKIAK (1122 aa). Positions 38-69 are enriched in low complexity; that stretch reads NNNNNNNNNNNNNNNNNNNNNNNNNNNNNNDN. The disordered stretch occupies residues 38–72; that stretch reads NNNNNNNNNNNNNNNNNNNNNNNNNNNNNNDNNEN. Residues 98-133 are a coiled coil; that stretch reads DFYINKIKKEIKDREKYKNNIENEILKINSQKKRKK. A disordered region spans residues 213–263; sequence NNNNNNNNNNNNNNNNNNKNNNNNNNNKNNNNNNNNKNNNNNNNNKNNNKN. Residues Asn-285, Asn-327, Asn-359, Asn-375, Asn-489, Asn-498, Asn-525, Asn-577, Asn-593, Asn-624, Asn-768, Asn-837, Asn-841, Asn-851, Asn-864, Asn-876, Asn-885, Asn-888, Asn-913, Asn-967, Asn-991, Asn-1097, and Asn-1109 are each glycosylated (N-linked (GlcNAc...) asparagine). The chain crosses the membrane as a helical span at residues 1150 to 1170; it reads IIIGISAIIVSIGVLITAILT. Topologically, residues 1171-1184 are cytoplasmic; sequence FIYRKRKIMRYSNP. The chain crosses the membrane as a helical span at residues 1185–1205; sequence VFLLIILVGCVCGLVSTFVSF. Over 1206–1211 the chain is Extracellular; the sequence is STTSAT. A helical membrane pass occupies residues 1212–1232; it reads CSIRMVLIPLFFFIITSAIFI. Topologically, residues 1233–1256 are cytoplasmic; the sequence is KQYRVYCLIRGVEELHDMSIENSY. The chain crosses the membrane as a helical span at residues 1257–1277; it reads LLKLQSFILIIPAILIAVSVI. At 1278–1304 the chain is on the extracellular side; that stretch reads ATRMHRKYNFDLQKETIQAYCYSKNFY. A helical transmembrane segment spans residues 1305–1325; it reads IIFICLALYEFSILLYGCWIV. Over 1326 to 1340 the chain is Cytoplasmic; sequence IKCRQYRSFPGSFNE. Residues 1341–1361 form a helical membrane-spanning segment; it reads FFYIGVLIYVLTVILVVSIPI. The Extracellular segment spans residues 1362–1372; it reads GFALLNSALTD. A helical membrane pass occupies residues 1373–1393; the sequence is FLLYSIPILVLIVAIIGLLFA. Residues 1394–1604 lie on the Cytoplasmic side of the membrane; sequence PKFYFLFRTD…KSSQNSPLLD (211 aa). Positions 1457-1604 are disordered; it reads TGSNTSDDVS…KSSQNSPLLD (148 aa). Composition is skewed to low complexity over residues 1471–1527 and 1534–1556; these read FDSP…NKNN and SSSN…GRSS. The segment covering 1563–1572 has biased composition (basic residues); that stretch reads NNKKNRRKNS. Polar residues predominate over residues 1573–1584; sequence LRTPILNSLLSP.

The protein belongs to the G-protein coupled receptor 3 family. GABA-B receptor subfamily.

Its subcellular location is the membrane. This chain is Metabotropic glutamate receptor-like protein R (grlR), found in Dictyostelium discoideum (Social amoeba).